Reading from the N-terminus, the 267-residue chain is Hydroxyethylthiazole kinase (267 aa).

M46 is a binding site for substrate. Positions 121 and 167 each coordinate ATP. A194 lines the substrate pocket.

This sequence belongs to the Thz kinase family. The cofactor is Mg(2+).

The enzyme catalyses 5-(2-hydroxyethyl)-4-methylthiazole + ATP = 4-methyl-5-(2-phosphooxyethyl)-thiazole + ADP + H(+). It participates in cofactor biosynthesis; thiamine diphosphate biosynthesis; 4-methyl-5-(2-phosphoethyl)-thiazole from 5-(2-hydroxyethyl)-4-methylthiazole: step 1/1. Catalyzes the phosphorylation of the hydroxyl group of 4-methyl-5-beta-hydroxyethylthiazole (THZ). The sequence is that of Hydroxyethylthiazole kinase from Rhizobium johnstonii (strain DSM 114642 / LMG 32736 / 3841) (Rhizobium leguminosarum bv. viciae).